Consider the following 493-residue polypeptide: tRNA(Ile)-lysidine synthase (493 aa).

An ATP-binding site is contributed by 26–31 (SGGSDS).

It belongs to the tRNA(Ile)-lysidine synthase family.

Its subcellular location is the cytoplasm. The enzyme catalyses cytidine(34) in tRNA(Ile2) + L-lysine + ATP = lysidine(34) in tRNA(Ile2) + AMP + diphosphate + H(+). Functionally, ligates lysine onto the cytidine present at position 34 of the AUA codon-specific tRNA(Ile) that contains the anticodon CAU, in an ATP-dependent manner. Cytidine is converted to lysidine, thus changing the amino acid specificity of the tRNA from methionine to isoleucine. The protein is tRNA(Ile)-lysidine synthase of Bartonella henselae (strain ATCC 49882 / DSM 28221 / CCUG 30454 / Houston 1) (Rochalimaea henselae).